The primary structure comprises 257 residues: NAD-capped RNA hydrolase NudC (257 aa).

Arginine 69 provides a ligand contact to substrate. Cysteine 98 and cysteine 101 together coordinate Zn(2+). Residue glutamate 111 coordinates substrate. Zn(2+) is bound by residues cysteine 116 and cysteine 119. Tyrosine 124 is a binding site for substrate. The Nudix hydrolase domain maps to 125-248 (PQIAPCIIVA…TVARRLIEDT (124 aa)). A divalent metal cation contacts are provided by alanine 158, glutamate 174, and glutamate 178. A Nudix box motif is present at residues 159–180 (GFVEVGETLEQAVAREVMEESG). Residue 192–199 (QPWPFPQS) coordinates substrate. Glutamate 219 contacts a divalent metal cation. Alanine 241 contacts substrate.

Belongs to the Nudix hydrolase family. NudC subfamily. Homodimer. Mg(2+) is required as a cofactor. Requires Mn(2+) as cofactor. The cofactor is Zn(2+).

It carries out the reaction a 5'-end NAD(+)-phospho-ribonucleoside in mRNA + H2O = a 5'-end phospho-adenosine-phospho-ribonucleoside in mRNA + beta-nicotinamide D-ribonucleotide + 2 H(+). The catalysed reaction is NAD(+) + H2O = beta-nicotinamide D-ribonucleotide + AMP + 2 H(+). The enzyme catalyses NADH + H2O = reduced beta-nicotinamide D-ribonucleotide + AMP + 2 H(+). MRNA decapping enzyme that specifically removes the nicotinamide adenine dinucleotide (NAD) cap from a subset of mRNAs by hydrolyzing the diphosphate linkage to produce nicotinamide mononucleotide (NMN) and 5' monophosphate mRNA. The NAD-cap is present at the 5'-end of some mRNAs and stabilizes RNA against 5'-processing. Has preference for mRNAs with a 5'-end purine. Catalyzes the hydrolysis of a broad range of dinucleotide pyrophosphates. This Salmonella typhi protein is NAD-capped RNA hydrolase NudC.